Here is a 481-residue protein sequence, read N- to C-terminus: Glutamate--tRNA ligase (481 aa).

The 'HIGH' region signature appears at 9–19 (PSPTGNLHIGT). 4 residues coordinate Zn(2+): Cys98, Cys100, His125, and Asp127. Positions 248-252 (KLSKR) match the 'KMSKS' region motif. Lys251 is a binding site for ATP.

The protein belongs to the class-I aminoacyl-tRNA synthetase family. Glutamate--tRNA ligase type 1 subfamily. In terms of assembly, monomer. The cofactor is Zn(2+).

The protein resides in the cytoplasm. The catalysed reaction is tRNA(Glu) + L-glutamate + ATP = L-glutamyl-tRNA(Glu) + AMP + diphosphate. Functionally, catalyzes the attachment of glutamate to tRNA(Glu) in a two-step reaction: glutamate is first activated by ATP to form Glu-AMP and then transferred to the acceptor end of tRNA(Glu). This is Glutamate--tRNA ligase from Synechococcus elongatus (strain ATCC 33912 / PCC 7942 / FACHB-805) (Anacystis nidulans R2).